Consider the following 277-residue polypeptide: Elongation factor Ts (277 aa).

The involved in Mg(2+) ion dislocation from EF-Tu stretch occupies residues 81-84; it reads TDFV.

It belongs to the EF-Ts family.

It localises to the cytoplasm. Functionally, associates with the EF-Tu.GDP complex and induces the exchange of GDP to GTP. It remains bound to the aminoacyl-tRNA.EF-Tu.GTP complex up to the GTP hydrolysis stage on the ribosome. The polypeptide is Elongation factor Ts (Amoebophilus asiaticus (strain 5a2)).